A 197-amino-acid polypeptide reads, in one-letter code: Ribonuclease HII (197 aa).

Residues 14 to 197 form the RNase H type-2 domain; it reads GIIAGVDEVG…RKNFAPIRIL (184 aa). Positions 20, 21, and 112 each coordinate a divalent metal cation.

Belongs to the RNase HII family. Requires Mn(2+) as cofactor. It depends on Mg(2+) as a cofactor.

Its subcellular location is the cytoplasm. It carries out the reaction Endonucleolytic cleavage to 5'-phosphomonoester.. Its function is as follows. Endonuclease that specifically degrades the RNA of RNA-DNA hybrids. The polypeptide is Ribonuclease HII (Wolbachia pipientis subsp. Culex pipiens (strain wPip)).